A 92-amino-acid polypeptide reads, in one-letter code: Small ribosomal subunit protein uS19 (92 aa).

Belongs to the universal ribosomal protein uS19 family.

In terms of biological role, protein S19 forms a complex with S13 that binds strongly to the 16S ribosomal RNA. The chain is Small ribosomal subunit protein uS19 from Cereibacter sphaeroides (strain ATCC 17029 / ATH 2.4.9) (Rhodobacter sphaeroides).